Here is a 197-residue protein sequence, read N- to C-terminus: Peptidoglycan-recognition protein 1 (197 aa).

Positions 1–23 (MKLATITFFLLTEIFFYISYAEA) are cleaved as a signal peptide. 2 disulfides stabilise this stretch: Cys-31/Cys-154 and Cys-68/Cys-74. The region spanning 53-180 (KPLERVVIHH…RNVKATKSPG (128 aa)) is the N-acetylmuramoyl-L-alanine amidase domain.

It belongs to the N-acetylmuramoyl-L-alanine amidase 2 family. In terms of tissue distribution, localizes to plasma (at protein level).

The protein resides in the secreted. Functionally, peptidoglycan-recognition protein probably involved in innate immunity by binding to peptidoglycans (PGN) of bacteria and activating the prophenoloxidase (proPO) cascade immune response. Binds to 1,3-beta-D-glucan and PGN. The protein is Peptidoglycan-recognition protein 1 (PGRP-1) of Holotrichia diomphalia (Korean black chafer).